Consider the following 249-residue polypeptide: Adenosylcobinamide-GDP ribazoletransferase (249 aa).

Transmembrane regions (helical) follow at residues 36–56 (LVGF…HSIG), 57–77 (LNLA…GGLH), 106–126 (VGAM…AFLF), 133–153 (KLTA…LAIT), 188–208 (LWLF…ITWL), and 226–246 (GALG…GQQI).

Belongs to the CobS family. It depends on Mg(2+) as a cofactor.

It localises to the cell membrane. It catalyses the reaction alpha-ribazole + adenosylcob(III)inamide-GDP = adenosylcob(III)alamin + GMP + H(+). The enzyme catalyses alpha-ribazole 5'-phosphate + adenosylcob(III)inamide-GDP = adenosylcob(III)alamin 5'-phosphate + GMP + H(+). The protein operates within cofactor biosynthesis; adenosylcobalamin biosynthesis; adenosylcobalamin from cob(II)yrinate a,c-diamide: step 7/7. In terms of biological role, joins adenosylcobinamide-GDP and alpha-ribazole to generate adenosylcobalamin (Ado-cobalamin). Also synthesizes adenosylcobalamin 5'-phosphate from adenosylcobinamide-GDP and alpha-ribazole 5'-phosphate. This is Adenosylcobinamide-GDP ribazoletransferase from Desulforamulus reducens (strain ATCC BAA-1160 / DSM 100696 / MI-1) (Desulfotomaculum reducens).